The sequence spans 172 residues: Small ribosomal subunit protein uS5 (172 aa).

The S5 DRBM domain maps to 17-80; sequence LREKMISVNR…EQARRNMFKV (64 aa).

It belongs to the universal ribosomal protein uS5 family. Part of the 30S ribosomal subunit. Contacts proteins S4 and S8.

Functionally, with S4 and S12 plays an important role in translational accuracy. Its function is as follows. Located at the back of the 30S subunit body where it stabilizes the conformation of the head with respect to the body. This is Small ribosomal subunit protein uS5 from Burkholderia orbicola (strain AU 1054).